The chain runs to 294 residues: N-acetylmuramic acid 6-phosphate etherase (294 aa).

Residues 54 to 217 form the SIS domain; sequence VIASFRKGGR…STTSMIGVGK (164 aa). Residue Glu-82 is the Proton donor of the active site. Glu-113 is a catalytic residue.

It belongs to the GCKR-like family. MurNAc-6-P etherase subfamily. In terms of assembly, homodimer.

It carries out the reaction N-acetyl-D-muramate 6-phosphate + H2O = N-acetyl-D-glucosamine 6-phosphate + (R)-lactate. Its pathway is amino-sugar metabolism; N-acetylmuramate degradation. Functionally, specifically catalyzes the cleavage of the D-lactyl ether substituent of MurNAc 6-phosphate, producing GlcNAc 6-phosphate and D-lactate. This Exiguobacterium sp. (strain ATCC BAA-1283 / AT1b) protein is N-acetylmuramic acid 6-phosphate etherase.